A 1790-amino-acid chain; its full sequence is Non-reducing polyketide synthase gsfA (1790 aa).

Residues 20 to 263 (GDQRTLFRKL…AMRKIQGMWH (244 aa)) are N-terminal acylcarrier protein transacylase domain (SAT). One can recognise a Ketosynthase family 3 (KS3) domain in the interval 392–822 (SSKIAVVGMS…GGNTAMIIEE (431 aa)). Active-site for beta-ketoacyl synthase activity residues include Cys563, His698, and His741. A malonyl-CoA:ACP transacylase (MAT) domain region spans residues 922–1223 (FAFAGQGTFY…CSTLHRDSDN (302 aa)). Positions 1298–1615 (TSSIHRLYSE…PRIMLNRFFQ (318 aa)) are product template (PT) domain. The N-terminal hotdog fold stretch occupies residues 1302 to 1435 (HRLYSENYDS…AYYEDPSTWL (134 aa)). Residues 1302 to 1611 (HRLYSENYDS…FRQWPRIMLN (310 aa)) form the PKS/mFAS DH domain. His1334 functions as the Proton acceptor; for dehydratase activity in the catalytic mechanism. The tract at residues 1460 to 1611 (MANKLTTSLA…FRQWPRIMLN (152 aa)) is C-terminal hotdog fold. Asp1518 acts as the Proton donor; for dehydratase activity in catalysis. Disordered regions lie at residues 1621–1648 (PPAP…EKTT) and 1686–1718 (LDYS…ADGA). A compositionally biased stretch (basic and acidic residues) spans 1699–1708 (SDERIEKTDS). In terms of domain architecture, Carrier spans 1716–1790 (DGANDVTSRA…TIGDLKKLLS (75 aa)). An O-(pantetheine 4'-phosphoryl)serine modification is found at Ser1753.

The enzyme catalyses 6 malonyl-CoA + acetyl-CoA + 4 H(+) = 2-(2,4-dihydroxy-6-oxidobenzoyl)-5-hydroxy-3-methylbenzenolate + 6 CO2 + 7 CoA + H2O. The protein operates within secondary metabolite biosynthesis; terpenoid biosynthesis. In terms of biological role, norlichexanthone synthase; part of the gene cluster that mediates the biosynthesis of griseofulvin, an important antifungal drug that has been in use for a long time for treating dermatophyte infections. The first step of the pathway is the formation of the heptaketide backbone by gsfA which is initiated by priming with acetyl-CoA, followed by sequential condensations of 6 malonyl-CoA units. The resulting benzophenone can undergo a spontaneous dehydration to form norlichexanthone. However, the true precursor for the griseofulvin biosynthesis is not norlichexanthone, but the heptaketide benzophenone that is O-methylated at 3-OH by gsfB to produce griseophenone D which is further methylated at 9-OH by gsfC to yield griseophenone C. Griseophenone C is then substrate of halogenase gsfI which is responsible for the regio-specific chlorination at the C13 position to form griseophenone B. The cytochrome P450 gsfF catalyzes the coupling of orcinol and phloroglucinol rings in griseophenone B to form desmethyl-dehydrogriseofulvin A which is further methylated at 5-OH by gsfD to yield dehydrogriseofulvin. Finally, gsfE performs stereospecific reduction of enone 18 of dehydrogriseofulvin to afford the final product griseofulvin. This chain is Non-reducing polyketide synthase gsfA, found in Penicillium aethiopicum.